The chain runs to 342 residues: S-adenosylmethionine:tRNA ribosyltransferase-isomerase (342 aa).

This sequence belongs to the QueA family. In terms of assembly, monomer.

It localises to the cytoplasm. The enzyme catalyses 7-aminomethyl-7-carbaguanosine(34) in tRNA + S-adenosyl-L-methionine = epoxyqueuosine(34) in tRNA + adenine + L-methionine + 2 H(+). It participates in tRNA modification; tRNA-queuosine biosynthesis. Transfers and isomerizes the ribose moiety from AdoMet to the 7-aminomethyl group of 7-deazaguanine (preQ1-tRNA) to give epoxyqueuosine (oQ-tRNA). This Campylobacter jejuni (strain RM1221) protein is S-adenosylmethionine:tRNA ribosyltransferase-isomerase.